The following is a 237-amino-acid chain: Ribonuclease 3 (237 aa).

One can recognise an RNase III domain in the interval 6–133 (LIEVEKLIGI…VIAAVYLDKG (128 aa)). Glu-46 lines the Mg(2+) pocket. The active site involves Asp-50. Residues Asp-119 and Glu-122 each contribute to the Mg(2+) site. The active site involves Glu-122. One can recognise a DRBM domain in the interval 160 to 229 (DFKTRLQEVL…AKAALQRLGE (70 aa)).

Belongs to the ribonuclease III family. In terms of assembly, homodimer. Requires Mg(2+) as cofactor.

Its subcellular location is the cytoplasm. It catalyses the reaction Endonucleolytic cleavage to 5'-phosphomonoester.. Its function is as follows. Digests double-stranded RNA. Involved in the processing of primary rRNA transcript to yield the immediate precursors to the large and small rRNAs (23S and 16S). Processes some mRNAs, and tRNAs when they are encoded in the rRNA operon. Processes pre-crRNA and tracrRNA of type II CRISPR loci if present in the organism. In Clostridium perfringens (strain 13 / Type A), this protein is Ribonuclease 3.